Reading from the N-terminus, the 540-residue chain is Medium/long-chain-fatty-acid--[acyl-carrier-protein] ligase FadD10 (540 aa).

Thr-177 provides a ligand contact to Mg(2+). ATP is bound by residues Ile-226, Val-316, and Ser-320. Glu-321 serves as a coordination point for Mg(2+). Asp-408 contacts ATP.

It belongs to the ATP-dependent AMP-binding enzyme family. Homodimer. Mg(2+) is required as a cofactor.

The protein resides in the cytoplasm. The catalysed reaction is a medium-chain fatty acid + holo-[ACP] + ATP = a medium-chain fatty acyl-[ACP] + AMP + diphosphate. The enzyme catalyses a medium-chain fatty acid + ATP + H(+) = a medium-chain fatty acyl-AMP + diphosphate. It carries out the reaction a medium-chain fatty acyl-AMP + holo-[ACP] = a medium-chain fatty acyl-[ACP] + AMP + H(+). It catalyses the reaction a long-chain fatty acid + holo-[ACP] + ATP = a long-chain fatty acyl-[ACP] + AMP + diphosphate. The catalysed reaction is a long-chain fatty acid + ATP + H(+) = a long-chain fatty acyl-AMP + diphosphate. The enzyme catalyses a long-chain fatty acyl-AMP + holo-[ACP] = a long-chain fatty acyl-[ACP] + AMP + H(+). It carries out the reaction a (2E)-enoyl fatty acid + holo-[ACP] + ATP = a (2E)-enoyl-[ACP] + AMP + diphosphate. It catalyses the reaction a (2E)-enoyl fatty acid + ATP + H(+) = a (2E)-2-fatty-enoyl-AMP + diphosphate. The catalysed reaction is a (2E)-2-fatty-enoyl-AMP + holo-[ACP] = a (2E)-enoyl-[ACP] + AMP + H(+). The enzyme catalyses a (3R)-3-isocyanyl-fatty acid + holo-[ACP] + ATP = a (3R)-3-isocyanyl-fatty acyl-[ACP] + AMP + diphosphate. It carries out the reaction a (3R)-3-isocyanyl-fatty acid + ATP + H(+) = a (3R)-3-isocyanyl-fatty acyl-AMP + diphosphate. It catalyses the reaction a (3R)-3-isocyanyl-fatty acyl-AMP + holo-[ACP] = a (3R)-3-isocyanyl-fatty acyl-[ACP] + AMP + H(+). It participates in lipid metabolism; fatty acid metabolism. Its function is as follows. Acyl:acyl-carrier protein ligase involved in the biosynthesis of a unique class of isonitrile lipopeptides (INLPs) that seem to function as virulence factors in M.tuberculosis and to play a role in metal acquisition. Catalyzes the activation of medium/long-chain fatty acids as acyl-adenylates (acyl-AMP), which are then transferred to the phosphopantetheine arm of the acyl-carrier protein (ACP) MT0109. Acts twice during the INLP pathway, catalyzing the activation of a (2E)-enoyl fatty acid as well as the corresponding (3R)-3-isocyanyl-fatty acid as acyl-adenylates (acyl-AMP), and then the acyl transfer to the dedicated acyl-carrier protein MT0109. This Mycobacterium tuberculosis (strain CDC 1551 / Oshkosh) protein is Medium/long-chain-fatty-acid--[acyl-carrier-protein] ligase FadD10 (fadD10).